The primary structure comprises 437 residues: Phosphatidylserine decarboxylase proenzyme 1, mitochondrial (437 aa).

Residues Met-1–Tyr-18 constitute a mitochondrion transit peptide. Residues Ser-19–Gly-38 are Mitochondrial matrix-facing. The chain crosses the membrane as a helical span at residues Leu-39–His-57. At Glu-58–His-437 the chain is on the mitochondrial intermembrane side. Residues Asp-157, His-287, and Ser-401 each act as charge relay system; for autoendoproteolytic cleavage activity in the active site. The active-site Schiff-base intermediate with substrate; via pyruvic acid; for decarboxylase activity is the Ser-401. Ser-401 carries the pyruvic acid (Ser); by autocatalysis modification.

The protein belongs to the phosphatidylserine decarboxylase family. PSD-B subfamily. Eukaryotic type I sub-subfamily. Heterodimer of a large membrane-associated beta subunit and a small pyruvoyl-containing alpha subunit. Pyruvate is required as a cofactor. Post-translationally, is synthesized initially as an inactive proenzyme. Formation of the active enzyme involves a self-maturation process in which the active site pyruvoyl group is generated from an internal serine residue via an autocatalytic post-translational modification. Two non-identical subunits are generated from the proenzyme in this reaction, and the pyruvate is formed at the N-terminus of the alpha chain, which is derived from the carboxyl end of the proenzyme. The autoendoproteolytic cleavage occurs by a canonical serine protease mechanism, in which the side chain hydroxyl group of the serine supplies its oxygen atom to form the C-terminus of the beta chain, while the remainder of the serine residue undergoes an oxidative deamination to produce ammonia and the pyruvoyl prosthetic group on the alpha chain. During this reaction, the Ser that is part of the protease active site of the proenzyme becomes the pyruvoyl prosthetic group, which constitutes an essential element of the active site of the mature decarboxylase.

The protein resides in the mitochondrion. It localises to the mitochondrion inner membrane. The enzyme catalyses a 1,2-diacyl-sn-glycero-3-phospho-L-serine + H(+) = a 1,2-diacyl-sn-glycero-3-phosphoethanolamine + CO2. The protein operates within phospholipid metabolism; phosphatidylethanolamine biosynthesis; phosphatidylethanolamine from CDP-diacylglycerol: step 2/2. Its function is as follows. Catalyzes the formation of phosphatidylethanolamine (PtdEtn) from phosphatidylserine (PtdSer). Plays a central role in phospholipid metabolism and in the interorganelle trafficking of phosphatidylserine. Together with psd2 and psd3, responsible for the majority of phosphatidylethanolamine synthesis. The protein is Phosphatidylserine decarboxylase proenzyme 1, mitochondrial of Schizosaccharomyces pombe (strain 972 / ATCC 24843) (Fission yeast).